Here is a 900-residue protein sequence, read N- to C-terminus: MVGMIRGGMGDQNWSRLVFWLILFSGLLVITLEENPEKDEIFLSQFMAPSTGQVNEHMEETSWAQRCWQDSDCVKEAVAEFNLCFPGSKDSRELFGLNHTNLKQTLLDCIQEKGKLNGHNPKYLELLSSMLDIPRRNLATKPGSSPSPSPSRPPKRSRGPPRPPTRPKSPPPRKSSFPPSRSPPPPPAKKNASKNSTSAPVSPAKKKEDHEKTIIIAVVVTAVSTFLLAALFFLCCSRVCGNGSGGRKNDERPLLSLSSSDYSVGSSINYGGSVKGDKQGHQSFNIYSNQGKMSSFDGSNSDTSDSLEERLSHEGLRNNSITNHGLPPLKPPPGRTASVLSGKSFSGKVEPLPPEPPKFLKVSSKKASAPPPPVPAPQMPSSAGPPRPPPPAPPPGSGGPKPPPPPGPKGPRPPPPMSLGPKAPRPPSGPADALDDDAPKTKLKPFFWDKVQANPEHSMVWNDIRSGSFQFNEEMIESLFGYAAADKNKNDKKGSSGQAALPQFVQILEPKKGQNLSILLRALNATTEEVCDALREGNELPVEFIQTLLKMAPTPEEELKLRLYCGEIAQLGSAERFLKAVVDIPFAFKRLEALLFMCTLHEEMAFVKESFQKLEVACKELRGSRLFLKLLEAVLKTGNRMNDGTFRGGAQAFKLDTLLKLADVKGTDGKTTLLHFVVQEIIRTEGVRAARTIRESQSFSSVKTEDLLVEETSEESEENYRNLGLEKVSGLSSELEHVKKSANIDADGLTGTVLKMGHALSKARDFVNSEMKSSGEESGFREALEDFIQNAEGSIMSILEEEKRIMALVKSTGDYFHGKAGKDEGLRLFVIVRDFLIILDKSCKEVREARGRPVRMARKQGSTASASSETPRQTPSLDPRQKLFPAITERRVDQSSSDSD.

The helical; Signal-anchor transmembrane segment at 15 to 32 (SRLVFWLILFSGLLVITL) threads the bilayer. A disordered region spans residues 136–209 (RNLATKPGSS…PVSPAKKKED (74 aa)). Over residues 160 to 173 (PPRPPTRPKSPPPR) the composition is skewed to pro residues. A helical transmembrane segment spans residues 214-234 (IIIAVVVTAVSTFLLAALFFL). Disordered regions lie at residues 273–440 (SVKG…DAPK) and 849–900 (ARGR…SDSD). A compositionally biased stretch (polar residues) spans 281–304 (HQSFNIYSNQGKMSSFDGSNSDTS). The span at 307–316 (LEERLSHEGL) shows a compositional bias: basic and acidic residues. The segment covering 359–368 (FLKVSSKKAS) has biased composition (low complexity). Residues 369 to 429 (APPPPVPAPQ…GPKAPRPPSG (61 aa)) show a composition bias toward pro residues. Positions 433-865 (ALDDDAPKTK…MARKQGSTAS (433 aa)) constitute an FH2 domain. Residues 860-876 (QGSTASASSETPRQTPS) are compositionally biased toward polar residues.

Belongs to the formin-like family. Class-I subfamily. As to expression, expressed in the endosperm. Localizes to the cell plate, a plant-specific membranous component that is assembled at the plane of cell division.

The protein localises to the membrane. In terms of biological role, might be involved in the organization and polarity of the actin cytoskeleton. Interacts with the barbed end of actin filaments and nucleates actin-filament polymerization in vitro. Seems to play a role in cytokinesis. The protein is Formin-like protein 5 (FH5) of Arabidopsis thaliana (Mouse-ear cress).